A 768-amino-acid polypeptide reads, in one-letter code: ATP-dependent zinc metalloprotease FtsH (768 aa).

Residues 1–33 (MADRDKNDIRKRLEELRKDNNRRNNRQDNGNRS) lie on the Cytoplasmic side of the membrane. A helical membrane pass occupies residues 34-54 (PFSGFLFFIFVILLFTFTLLF). Over 55–139 (HRDIQTYFQE…KLNSLQPSGG (85 aa)) the chain is Periplasmic. The helical transmembrane segment at 140-160 (GFFLLLLGQFLPMIIMIGLMV) threads the bilayer. The Cytoplasmic portion of the chain corresponds to 161 to 768 (YLAKKMVGGS…SNFKLPSFME (608 aa)). 238-245 (GRPGTGKT) contacts ATP. His461 contributes to the Zn(2+) binding site. Glu462 is an active-site residue. His465 and Asp536 together coordinate Zn(2+). A disordered region spans residues 647 to 768 (EESIQKGSEG…SNFKLPSFME (122 aa)). Basic and acidic residues predominate over residues 669-698 (QENKTVEAEVHDSNLKSDTEKLAEAVREIT). Acidic residues predominate over residues 715 to 731 (KDSDDNEKNDDDNENSD).

In the central section; belongs to the AAA ATPase family. The protein in the C-terminal section; belongs to the peptidase M41 family. Homohexamer. Zn(2+) is required as a cofactor.

The protein localises to the cell inner membrane. In terms of biological role, acts as a processive, ATP-dependent zinc metallopeptidase for both cytoplasmic and membrane proteins. Plays a role in the quality control of integral membrane proteins. This Leptotrichia buccalis (strain ATCC 14201 / DSM 1135 / JCM 12969 / NCTC 10249 / C-1013-b) protein is ATP-dependent zinc metalloprotease FtsH.